A 227-amino-acid polypeptide reads, in one-letter code: Ras-related protein Rab-3C (227 aa).

9 residues coordinate GTP: Ser-39, Gly-42, Lys-43, Thr-44, Ser-45, Thr-56, Ser-57, Ser-61, and Thr-62. A Mg(2+)-binding site is contributed by Thr-44. The Switch 1 motif lies at 53 to 66 (DSFTSAFVSTVGID). Residues Thr-62 and Asp-85 each contribute to the Mg(2+) site. A Phosphothreonine modification is found at Thr-86. The short motif at 86-104 (TAGQERYRTITTAYYRGAM) is the Switch 2 element. Gly-88, Asn-143, Lys-144, Asp-146, Ala-174, and Lys-175 together coordinate GTP. Residues Ser-196 and Ser-198 each carry the phosphoserine modification. Position 206 is a phosphothreonine (Thr-206). S-geranylgeranyl cysteine attachment occurs at residues Cys-225 and Cys-227. Residue Cys-227 is modified to Cysteine methyl ester.

Belongs to the small GTPase superfamily. Rab family. Interacts with RIMS1, RIMS2, RPH3A and RPH3AL. The GTP-bound form interacts with REP15. Interacts with GDI2, CHM and CHML; phosphorylation at Thr-86 disrupts these interactions. Interacts with MADD (via uDENN domain); the GTP-bound form is preferred for interaction. It depends on Mg(2+) as a cofactor. In terms of processing, phosphorylation of Thr-86 in the switch II region by LRRK2 prevents the association of RAB regulatory proteins, including CHM, CHML and RAB GDP dissociation inhibitor GDI2.

Its subcellular location is the cell membrane. The enzyme catalyses GTP + H2O = GDP + phosphate + H(+). Its activity is regulated as follows. Regulated by guanine nucleotide exchange factors (GEFs) which promote the exchange of bound GDP for free GTP. Regulated by GTPase activating proteins (GAPs) which increase the GTP hydrolysis activity. Inhibited by GDP dissociation inhibitors (GDIs) which prevent Rab-GDP dissociation. The small GTPases Rab are key regulators of intracellular membrane trafficking, from the formation of transport vesicles to their fusion with membranes. Rabs cycle between an inactive GDP-bound form and an active GTP-bound form that is able to recruit to membranes different sets of downstream effectors directly responsible for vesicle formation, movement, tethering and fusion. This chain is Ras-related protein Rab-3C (RAB3C), found in Bos taurus (Bovine).